The sequence spans 968 residues: MPFTLGQRWISDTESELGLGTVVAVDARTVTLLFPSTGENRLYARSDSPVTRVMFNPGDTITSHDGWQMQVEEVKEENGLLTYIGTRLDTEESGVALREVFLDSKLVFSKPQDRLFAGQIDRMDRFALRYRARKYSSEQFRMPYSGLRGQRTSLIPHQLNIAHDVGRRHAPRVLLADEVGLGKTIEAGMILHQQLLSGAAERVLIIVPETLQHQWLVEMLRRFNLRFALFDDERYAEAQHDAYNPFDTEQLVICSLDFARRSKQRLEHLCEAEWDLLVVDEAHHLVWSEDAPSREYQAIEQLAEHVPGVLLLTATPEQLGMESHFARLRLLDPNRFHDFAQFVEEQKNYRPVADAVAMLLAGNKLSNDELNMLGEMIGEQDIEPLLQAANSDSEDAQSARQELVSMLMDRHGTSRVLFRNTRNGVKGFPKRELHTIKLPLPTQYQTAIKVSGIMGARKSAEDRARDMLYPERIYQEFEGDNATWWNFDPRVEWLMGYLTSHRSQKVLVICAKAATALQLEQVLREREGIRAAVFHEGMSIIERDRAAAWFAEEDTGAQVLLCSEIGSEGRNFQFASHMVMFDLPFNPDLLEQRIGRLDRIGQAHDIQIHVPYLEKTAQSVLVRWYHEGLDAFEHTCPTGRTIYDSVYNDLINYLASPDQTEGFDDLIKSCREQHEALKAQLEQGRDRLLEIHSNGGEKAQALAESIEEQDDDTNLIAFAMNLFDIIGINQDDRGDNMIVLTPSDHMLVPDFPGLSEDGITITFDREVALAREDAQFITWEHPLIRNGLDLILSGDTGSSTISLLKNKALPVGTLLVELIYVVEAQAPKQLQLNRFLPPTPVRMLLDKNGNNLAAQVEFETFNRQLNAVNRHTGSKLVNAVQQDVHAILQLGEAQIEKSARALIDAARNEADEKLSAELSRLEALRAVNPNIRDDELTAIESNRQQVMESLDQAGWRLDALRLIVVTHQ.

The Helicase ATP-binding domain occupies 164 to 334 (DVGRRHAPRV…FARLRLLDPN (171 aa)). Residue 177–184 (DEVGLGKT) participates in ATP binding. The DEAH box motif lies at 280 to 283 (DEAH). Residues 490–662 (RVEWLMGYLT…YLASPDQTEG (173 aa)) enclose the Helicase C-terminal domain.

It belongs to the SNF2/RAD54 helicase family. RapA subfamily. As to quaternary structure, interacts with the RNAP. Has a higher affinity for the core RNAP than for the holoenzyme. Its ATPase activity is stimulated by binding to RNAP.

Transcription regulator that activates transcription by stimulating RNA polymerase (RNAP) recycling in case of stress conditions such as supercoiled DNA or high salt concentrations. Probably acts by releasing the RNAP, when it is trapped or immobilized on tightly supercoiled DNA. Does not activate transcription on linear DNA. Probably not involved in DNA repair. The protein is RNA polymerase-associated protein RapA of Shigella flexneri serotype 5b (strain 8401).